Here is a 154-residue protein sequence, read N- to C-terminus: 6,7-dimethyl-8-ribityllumazine synthase (154 aa).

Residues F22, 56–58, and 80–82 each bind 5-amino-6-(D-ribitylamino)uracil; these read AFE and AVI. 85 to 86 serves as a coordination point for (2S)-2-hydroxy-3-oxobutyl phosphate; the sequence is ET. H88 (proton donor) is an active-site residue. Position 113 (F113) interacts with 5-amino-6-(D-ribitylamino)uracil. R127 serves as a coordination point for (2S)-2-hydroxy-3-oxobutyl phosphate.

The protein belongs to the DMRL synthase family.

It catalyses the reaction (2S)-2-hydroxy-3-oxobutyl phosphate + 5-amino-6-(D-ribitylamino)uracil = 6,7-dimethyl-8-(1-D-ribityl)lumazine + phosphate + 2 H2O + H(+). It participates in cofactor biosynthesis; riboflavin biosynthesis; riboflavin from 2-hydroxy-3-oxobutyl phosphate and 5-amino-6-(D-ribitylamino)uracil: step 1/2. Catalyzes the formation of 6,7-dimethyl-8-ribityllumazine by condensation of 5-amino-6-(D-ribitylamino)uracil with 3,4-dihydroxy-2-butanone 4-phosphate. This is the penultimate step in the biosynthesis of riboflavin. The chain is 6,7-dimethyl-8-ribityllumazine synthase from Thermoanaerobacter pseudethanolicus (strain ATCC 33223 / 39E) (Clostridium thermohydrosulfuricum).